The sequence spans 638 residues: ATP-dependent zinc metalloprotease FtsH (638 aa).

The Cytoplasmic portion of the chain corresponds to 1 to 11 (MSQKGKNKKWR). A helical transmembrane segment spans residues 12–32 (SAGLYALLAIVLISLATTFLG). Residues 33–114 (NRPPERLEIS…LAVRPVQEEG (82 aa)) are Lumenal-facing. The helical transmembrane segment at 115 to 135 (LLGRILSTFFLPVLLLLGLFF) threads the bilayer. Topologically, residues 136 to 638 (LLRRAQNGPG…TLPMAVNAGA (503 aa)) are cytoplasmic. 209–216 (GPPGTGKT) serves as a coordination point for ATP. His-431 provides a ligand contact to Zn(2+). The active site involves Glu-432. The Zn(2+) site is built by His-435 and Asp-510.

In the central section; belongs to the AAA ATPase family. It in the C-terminal section; belongs to the peptidase M41 family. As to quaternary structure, homohexamer. The cofactor is Zn(2+).

The protein localises to the cellular thylakoid membrane. In terms of biological role, acts as a processive, ATP-dependent zinc metallopeptidase for both cytoplasmic and membrane proteins. Plays a role in the quality control of integral membrane proteins. This chain is ATP-dependent zinc metalloprotease FtsH, found in Synechococcus sp. (strain JA-2-3B'a(2-13)) (Cyanobacteria bacterium Yellowstone B-Prime).